The following is a 299-amino-acid chain: tRNA dimethylallyltransferase (299 aa).

Gly-13 to Thr-20 provides a ligand contact to ATP. Position 15 to 20 (Thr-15 to Thr-20) interacts with substrate. Positions Asp-38–Gln-41 are interaction with substrate tRNA.

It belongs to the IPP transferase family. As to quaternary structure, monomer. The cofactor is Mg(2+).

It carries out the reaction adenosine(37) in tRNA + dimethylallyl diphosphate = N(6)-dimethylallyladenosine(37) in tRNA + diphosphate. In terms of biological role, catalyzes the transfer of a dimethylallyl group onto the adenine at position 37 in tRNAs that read codons beginning with uridine, leading to the formation of N6-(dimethylallyl)adenosine (i(6)A). In Prochlorococcus marinus (strain MIT 9301), this protein is tRNA dimethylallyltransferase.